Here is a 152-residue protein sequence, read N- to C-terminus: UPF0266 membrane protein YobD (152 aa).

3 helical membrane-spanning segments follow: residues 6–26 (LVLI…QFIM), 45–65 (VDSV…VTSH), and 67–87 (AQMT…IFWI).

The protein belongs to the UPF0266 family.

It localises to the cell inner membrane. The protein is UPF0266 membrane protein YobD of Salmonella dublin (strain CT_02021853).